The sequence spans 908 residues: Alanine--tRNA ligase (908 aa).

The Zn(2+) site is built by H588, H592, C691, and H695.

The protein belongs to the class-II aminoacyl-tRNA synthetase family. Zn(2+) is required as a cofactor.

It is found in the cytoplasm. It carries out the reaction tRNA(Ala) + L-alanine + ATP = L-alanyl-tRNA(Ala) + AMP + diphosphate. Functionally, catalyzes the attachment of alanine to tRNA(Ala) in a two-step reaction: alanine is first activated by ATP to form Ala-AMP and then transferred to the acceptor end of tRNA(Ala). Also edits incorrectly charged Ser-tRNA(Ala) and Gly-tRNA(Ala) via its editing domain. The polypeptide is Alanine--tRNA ligase (Mycobacterium leprae (strain TN)).